A 259-amino-acid chain; its full sequence is MVTTTSPVKAESRNLSFYYSSGHKALKGITMPLYEKRITALIGPSGCGKSTFLRCFNRMHDLYPGNKYDGQIVMYPDNTNILDNGVDPIEVRMRISMVFQKPNPFPKSIYENVAYGLRVRGERNKRVVDDKVEEALKGAALWDEVKDRLHDLAFNLSGGQQQRLCIARALATDPEIMLFDEPTSALDPIATANIEELMSELRNKLTILVVTHNMQQAARVSDYTAYMYLGELIEYDDTDKIFTNPSRKETEDYITGKFG.

Positions 10 to 254 constitute an ABC transporter domain; that stretch reads AESRNLSFYY…PSRKETEDYI (245 aa). 43–50 is a binding site for ATP; it reads GPSGCGKS.

The protein belongs to the ABC transporter superfamily. Phosphate importer (TC 3.A.1.7) family. As to quaternary structure, the complex is composed of two ATP-binding proteins (PstB), two transmembrane proteins (PstC and PstA) and a solute-binding protein (PstS).

It is found in the cell inner membrane. The enzyme catalyses phosphate(out) + ATP + H2O = ADP + 2 phosphate(in) + H(+). Its function is as follows. Part of the ABC transporter complex PstSACB involved in phosphate import. Responsible for energy coupling to the transport system. The protein is Phosphate import ATP-binding protein PstB of Methylobacillus flagellatus (strain ATCC 51484 / DSM 6875 / VKM B-1610 / KT).